We begin with the raw amino-acid sequence, 197 residues long: Adenylyl-sulfate kinase (197 aa).

Residue 31–38 participates in ATP binding; sequence GLSGAGKS. Ser105 (phosphoserine intermediate) is an active-site residue.

This sequence belongs to the APS kinase family.

It carries out the reaction adenosine 5'-phosphosulfate + ATP = 3'-phosphoadenylyl sulfate + ADP + H(+). It functions in the pathway sulfur metabolism; hydrogen sulfide biosynthesis; sulfite from sulfate: step 2/3. Its function is as follows. Catalyzes the synthesis of activated sulfate. The sequence is that of Adenylyl-sulfate kinase from Aeromonas hydrophila subsp. hydrophila (strain ATCC 7966 / DSM 30187 / BCRC 13018 / CCUG 14551 / JCM 1027 / KCTC 2358 / NCIMB 9240 / NCTC 8049).